The primary structure comprises 449 residues: Glucose-6-phosphate isomerase (449 aa).

Residue Glu-291 is the Proton donor of the active site. Catalysis depends on residues His-312 and Lys-426.

Belongs to the GPI family.

The protein resides in the cytoplasm. The catalysed reaction is alpha-D-glucose 6-phosphate = beta-D-fructose 6-phosphate. It participates in carbohydrate biosynthesis; gluconeogenesis. The protein operates within carbohydrate degradation; glycolysis; D-glyceraldehyde 3-phosphate and glycerone phosphate from D-glucose: step 2/4. In terms of biological role, catalyzes the reversible isomerization of glucose-6-phosphate to fructose-6-phosphate. This chain is Glucose-6-phosphate isomerase, found in Clostridium botulinum (strain Alaska E43 / Type E3).